A 130-amino-acid chain; its full sequence is uncharacterized protein (130 aa).

This is an uncharacterized protein from Methanocaldococcus jannaschii (strain ATCC 43067 / DSM 2661 / JAL-1 / JCM 10045 / NBRC 100440) (Methanococcus jannaschii).